The sequence spans 330 residues: Ketol-acid reductoisomerase (NADP(+)) (330 aa).

In terms of domain architecture, KARI N-terminal Rossmann spans 1–181; it reads MNVYYEQDAD…GGTKAGVIET (181 aa). Residues 24-27, Arg-47, Ser-50, Ser-52, and 82-85 contribute to the NADP(+) site; these read YGSQ and DQNQ. The active site involves His-107. Gly-133 is a binding site for NADP(+). Positions 182–327 constitute a KARI C-terminal knotted domain; that stretch reads SIKNETETDL…AKLRDMMSWL (146 aa). 4 residues coordinate Mg(2+): Asp-190, Glu-194, Glu-226, and Glu-230. Position 251 (Ser-251) interacts with substrate.

The protein belongs to the ketol-acid reductoisomerase family. Mg(2+) serves as cofactor.

It catalyses the reaction (2R)-2,3-dihydroxy-3-methylbutanoate + NADP(+) = (2S)-2-acetolactate + NADPH + H(+). The catalysed reaction is (2R,3R)-2,3-dihydroxy-3-methylpentanoate + NADP(+) = (S)-2-ethyl-2-hydroxy-3-oxobutanoate + NADPH + H(+). It participates in amino-acid biosynthesis; L-isoleucine biosynthesis; L-isoleucine from 2-oxobutanoate: step 2/4. It functions in the pathway amino-acid biosynthesis; L-valine biosynthesis; L-valine from pyruvate: step 2/4. Functionally, involved in the biosynthesis of branched-chain amino acids (BCAA). Catalyzes an alkyl-migration followed by a ketol-acid reduction of (S)-2-acetolactate (S2AL) to yield (R)-2,3-dihydroxy-isovalerate. In the isomerase reaction, S2AL is rearranged via a Mg-dependent methyl migration to produce 3-hydroxy-3-methyl-2-ketobutyrate (HMKB). In the reductase reaction, this 2-ketoacid undergoes a metal-dependent reduction by NADPH to yield (R)-2,3-dihydroxy-isovalerate. This Pelodictyon phaeoclathratiforme (strain DSM 5477 / BU-1) protein is Ketol-acid reductoisomerase (NADP(+)).